Here is a 163-residue protein sequence, read N- to C-terminus: MLKSLKQHTTTSLVLQHFANAGQAAVNCGMYAGLAATYGGKAMFQGVLGLCAYKEFAGEVMTGHAFGFAMPKVLSGLVAGVAGAIYHHPTAVMATFVTAAILTSPENAYETVKNAAFTGLEAAHFVYENTAGIANGVAGICNLVYENLPSHSEVSTSNICNRR.

The protein belongs to the UPF0416 family.

This Rickettsia bellii (strain RML369-C) protein is UPF0416 protein RBE_0909.